Consider the following 109-residue polypeptide: Large ribosomal subunit protein P2 (109 aa).

The disordered stretch occupies residues 63–109; sequence ASVPSGGAGGASGGAAAAGGAAEEAKEEEKEEEKEESDEDMGFGLFD. The span at 68-79 shows a compositional bias: gly residues; it reads GGAGGASGGAAA. Residues 91–103 are compositionally biased toward acidic residues; the sequence is EKEEEKEESDEDM. Position 99 is a phosphoserine (serine 99).

The protein belongs to the eukaryotic ribosomal protein P1/P2 family. As to quaternary structure, P1 and P2 exist as dimers at the large ribosomal subunit.

Its function is as follows. Plays an important role in the elongation step of protein synthesis. This Fusarium culmorum protein is Large ribosomal subunit protein P2.